The chain runs to 259 residues: Phosphatidylglycerol--prolipoprotein diacylglyceryl transferase (259 aa).

Transmembrane regions (helical) follow at residues 16–36 (FAIS…WFYA), 55–75 (FITY…VLLY), 92–112 (QGGM…YLFC), and 117–137 (VNFL…LFLG). Position 138 (R138) interacts with a 1,2-diacyl-sn-glycero-3-phospho-(1'-sn-glycerol). 3 consecutive transmembrane segments (helical) span residues 172–192 (QLYE…YATF), 201–221 (ALNL…IEIF), and 228–248 (IGFI…MLIL).

Belongs to the Lgt family.

Its subcellular location is the cell inner membrane. The catalysed reaction is L-cysteinyl-[prolipoprotein] + a 1,2-diacyl-sn-glycero-3-phospho-(1'-sn-glycerol) = an S-1,2-diacyl-sn-glyceryl-L-cysteinyl-[prolipoprotein] + sn-glycerol 1-phosphate + H(+). Its pathway is protein modification; lipoprotein biosynthesis (diacylglyceryl transfer). Catalyzes the transfer of the diacylglyceryl group from phosphatidylglycerol to the sulfhydryl group of the N-terminal cysteine of a prolipoprotein, the first step in the formation of mature lipoproteins. The sequence is that of Phosphatidylglycerol--prolipoprotein diacylglyceryl transferase from Rickettsia canadensis (strain McKiel).